The primary structure comprises 399 residues: MEQPSLESMLELQRFPRNPFSLVLLLLYFPFGLCLFLIRLFIGAHVFLVSCVLPDSVFRRILLRVMSSVLGVYVSHSELRPWDQRGKILICNHRTAFDHSVISRIAPCCSPSVSCAPGFLCWARGFLELGALGSRTQLMESLKHYLSQPGGAPLLLFPEEDTTNGRTGLLHFSSWPFSLSDSVQPLSLTVQRPLIAVAVSGCSWVTELFWLLFIPFTVYQVRWLPSVCRLPRESDEDFACRVQQIVSLSLGVVATRHTAADRAEYVKRRRCELPAPKSQPLSPTHIQMAQHVKEVLPQVPLSAIHRDLGHTGCVDTTITNFLEGRVTFVAEEEETTGAAEGTSKSRVSRPLPQGFAKKPEDRHLSLQDRKQILYECARRKYLEKFGSVPGEEEEEGARG.

Topologically, residues 1-21 (MEQPSLESMLELQRFPRNPFS) are cytoplasmic. The stretch at 22-42 (LVLLLLYFPFGLCLFLIRLFI) is an intramembrane region. The Cytoplasmic segment spans residues 43-399 (GAHVFLVSCV…GEEEEEGARG (357 aa)). A CUE domain is found at 284-326 (THIQMAQHVKEVLPQVPLSAIHRDLGHTGCVDTTITNFLEGRV). The segment at 332–364 (EEETTGAAEGTSKSRVSRPLPQGFAKKPEDRHL) is disordered.

Belongs to the AUP1 family.

It localises to the endoplasmic reticulum membrane. It is found in the lipid droplet. Plays a role in the translocation of terminally misfolded proteins from the endoplasmic reticulum lumen to the cytoplasm and their degradation by the proteasome. Plays a role in lipid droplet formation. Induces lipid droplet clustering. The sequence is that of Lipid droplet-regulating VLDL assembly factor AUP1 from Xenopus laevis (African clawed frog).